The following is a 251-amino-acid chain: Probable transcriptional regulatory protein DET0444 (251 aa).

Belongs to the TACO1 family.

The protein resides in the cytoplasm. This chain is Probable transcriptional regulatory protein DET0444, found in Dehalococcoides mccartyi (strain ATCC BAA-2266 / KCTC 15142 / 195) (Dehalococcoides ethenogenes (strain 195)).